The chain runs to 67 residues: Large ribosomal subunit protein bL32 (67 aa).

Positions 1 to 19 are enriched in basic residues; the sequence is MAVPKRKMSRANTRARRAQ. The segment at 1–20 is disordered; sequence MAVPKRKMSRANTRARRAQW.

It belongs to the bacterial ribosomal protein bL32 family.

The sequence is that of Large ribosomal subunit protein bL32 from Paenarthrobacter aurescens (strain TC1).